Reading from the N-terminus, the 391-residue chain is Phosphatidate cytidylyltransferase 4, chloroplastic (391 aa).

A chloroplast-targeting transit peptide spans 1 to 61; it reads MATFAELVLS…SVSRRFLTAV (61 aa). 6 helical membrane passes run 102–122, 175–195, 202–222, 254–274, 298–318, and 321–341; these read IFGIGIGLPVGCVVLAGGWVF, FGNIDILVTSAAFVVAIALLV, FAQLSSTMFGLFYCGYLPSFW, VGLVATLISFSGVIATDTFAF, IVGLVGCIAITILLSKYLSWP, and LFSSVAFGFLNFFGSVFGDLT.

It belongs to the CDS family. It depends on Mg(2+) as a cofactor.

Its subcellular location is the plastid. It localises to the chloroplast membrane. The enzyme catalyses a 1,2-diacyl-sn-glycero-3-phosphate + CTP + H(+) = a CDP-1,2-diacyl-sn-glycerol + diphosphate. It participates in phospholipid metabolism; CDP-diacylglycerol biosynthesis; CDP-diacylglycerol from sn-glycerol 3-phosphate: step 3/3. With respect to regulation, highest activities is obtained at about 30 mM CTP and 2 mM phosphatidic acid (PA). Its function is as follows. May be involved in the synthesis of minor phospholipids and in modulation of IP3-mediated signal transduction. Promotes the biosynthesis of plastidial phosphatidylglycerol (PG) which is required for structure and function of thylakoid membranes and, hence, for photoautotrophic growth. The protein is Phosphatidate cytidylyltransferase 4, chloroplastic of Arabidopsis thaliana (Mouse-ear cress).